We begin with the raw amino-acid sequence, 78 residues long: Conotoxin ArMKLT2-0312 (78 aa).

Positions 1-22 (MKLTCVLIIAVLFLTACQLITA) are cleaved as a signal peptide. Positions 23 to 45 (DYSRDKQEYRAVRLRDAMRYSRV) are excised as a propeptide. A Pyrrolidone carboxylic acid modification is found at Gln-48. 3 cysteine pairs are disulfide-bonded: Cys-49–Cys-62, Cys-56–Cys-67, and Cys-61–Cys-75.

It belongs to the conotoxin O1 superfamily. Expressed by the venom duct.

The protein resides in the secreted. This chain is Conotoxin ArMKLT2-0312, found in Conus arenatus (Sand-dusted cone).